Here is a 506-residue protein sequence, read N- to C-terminus: Histidine ammonia-lyase (506 aa).

A cross-link (5-imidazolinone (Ala-Gly)) is located at residues 143 to 145 (ASG). Ser144 is modified (2,3-didehydroalanine (Ser)).

Belongs to the PAL/histidase family. Contains an active site 4-methylidene-imidazol-5-one (MIO), which is formed autocatalytically by cyclization and dehydration of residues Ala-Ser-Gly.

It localises to the cytoplasm. It catalyses the reaction L-histidine = trans-urocanate + NH4(+). The protein operates within amino-acid degradation; L-histidine degradation into L-glutamate; N-formimidoyl-L-glutamate from L-histidine: step 1/3. The polypeptide is Histidine ammonia-lyase (Citrobacter koseri (strain ATCC BAA-895 / CDC 4225-83 / SGSC4696)).